Consider the following 176-residue polypeptide: Acireductone dioxygenase (176 aa).

Fe(2+)-binding residues include His-81, His-83, Glu-87, and His-126. The Ni(2+) site is built by His-81, His-83, Glu-87, and His-126.

It belongs to the acireductone dioxygenase (ARD) family. It depends on Fe(2+) as a cofactor. The cofactor is Ni(2+).

Its subcellular location is the cytoplasm. The protein localises to the nucleus. It carries out the reaction 1,2-dihydroxy-5-(methylsulfanyl)pent-1-en-3-one + O2 = 4-methylsulfanyl-2-oxobutanoate + formate + 2 H(+). The catalysed reaction is 1,2-dihydroxy-5-(methylsulfanyl)pent-1-en-3-one + O2 = 3-(methylsulfanyl)propanoate + CO + formate + 2 H(+). The protein operates within amino-acid biosynthesis; L-methionine biosynthesis via salvage pathway; L-methionine from S-methyl-5-thio-alpha-D-ribose 1-phosphate: step 5/6. Functionally, catalyzes 2 different reactions between oxygen and the acireductone 1,2-dihydroxy-3-keto-5-methylthiopentene (DHK-MTPene) depending upon the metal bound in the active site. Fe-containing acireductone dioxygenase (Fe-ARD) produces formate and 2-keto-4-methylthiobutyrate (KMTB), the alpha-ketoacid precursor of methionine in the methionine recycle pathway. Ni-containing acireductone dioxygenase (Ni-ARD) produces methylthiopropionate, carbon monoxide and formate, and does not lie on the methionine recycle pathway. In Sclerotinia sclerotiorum (strain ATCC 18683 / 1980 / Ss-1) (White mold), this protein is Acireductone dioxygenase (adi1).